Consider the following 148-residue polypeptide: Ubiquitin-like protein 4A (148 aa).

The 76-residue stretch at 1–76 (MQLTVKALKG…LNLMVKEQVA (76 aa)) folds into the Ubiquitin-like domain.

Component of the bag6/bat3 complex.

The protein localises to the cytoplasm. It localises to the cytosol. Its subcellular location is the nucleus. Functionally, as part of a cytosolic protein quality control complex, the bag6/bat3 complex, maintains misfolded and hydrophobic patches-containing proteins in a soluble state and participates in their proper delivery to the endoplasmic reticulum or alternatively can promote their sorting to the proteasome where they undergo degradation. The bag6/bat3 complex is involved in the post-translational delivery of tail-anchored/type II transmembrane proteins to the endoplasmic reticulum membrane. Similarly, the bag6/bat3 complex also functions as a sorting platform for proteins of the secretory pathway that are mislocalized to the cytosol either delivering them to the proteasome for degradation or to the endoplasmic reticulum. The bag6/bat3 complex also plays a role in the endoplasmic reticulum-associated degradation (ERAD), a quality control mechanism that eliminates unwanted proteins of the endoplasmic reticulum through their retrotranslocation to the cytosol and their targeting to the proteasome. It maintains these retrotranslocated proteins in an unfolded yet soluble state condition in the cytosol to ensure their proper delivery to the proteasome. This chain is Ubiquitin-like protein 4A (ubl4a), found in Xenopus tropicalis (Western clawed frog).